Reading from the N-terminus, the 551-residue chain is MADGVDHIDIYADVGEEFNQEAEYGGHDQIDLYDDVISPSANNGDAPEDRDYMDTLPPTVGDDVGKGAAPNVVYTYTGKRIALYIGNLTWWTTDEDLTEAVHSLGVNDILEIKFFENRANGQSKGFALVGVGSEASSKKLMDLLPKRELHGQNPVVTPCNKQFLSQFEMQSRKTTQSGQMSGEGKAGPPGGSSRAAFPQGGRGRGRFPGAVPGGDRFPGPAGPGGPPPPFPAGQTPPRPPLGPPGPPGPPGPPPPGQVLPPPLAGPPNRGDRPPPPVLFPGQPFGQPPLGPLPPGPPPPVPGYGPPPGPPPPQQGPPPPPGPFPPRPPGPLGPPLTLAPPPHLPGPPPGAPPPAPHVNPAFFPPPTNSGMPTSDSRGPPPTDPYGRPPPYDRGDYGPPGREMDTARTPLSEAEFEEIMNRNRAISSSAISRAVSDASAGDYGSAIETLVTAISLIKQSKVSADDRCKVLISSLQDCLHGIESKSYGSGSRRERSRERDHSRSREKSRRHKSRSRDRHDDYYRERSRERERHRDRDRDRDRERDREREYRHR.

The interval 1–213 (MADGVDHIDI…RGRFPGAVPG (213 aa)) is necessary for interaction with NXF1. In terms of domain architecture, RRM spans 81–161 (IALYIGNLTW…QNPVVTPCNK (81 aa)). A necessary for interaction with NUDT21/CPSF5 region spans residues 81 to 161 (IALYIGNLTW…QNPVVTPCNK (81 aa)). A necessary for nuclear paraspeckles localization region spans residues 81 to 161 (IALYIGNLTW…QNPVVTPCNK (81 aa)). Threonine 157 carries the phosphothreonine modification. Residues 169 to 180 (MQSRKTTQSGQM) show a composition bias toward polar residues. Disordered regions lie at residues 169–411 (MQSR…PLSE) and 477–551 (LHGI…YRHR). The GAR signature appears at 202 to 206 (RGRGR). Over residues 207–219 (FPGAVPGGDRFPG) the composition is skewed to low complexity. 3 stretches are compositionally biased toward pro residues: residues 220 to 265 (PAGP…PLAG), 285 to 366 (GQPP…PPPT), and 377 to 388 (GPPPTDPYGRPP). The interval 358–551 (NPAFFPPPTN…RDREREYRHR (194 aa)) is (Microbial infection) Binds to HIV-1 capsid protein p24 (CA). Over residues 389 to 404 (PYDRGDYGPPGREMDT) the composition is skewed to basic and acidic residues. 2 positions are modified to phosphothreonine: threonine 404 and threonine 407. The segment at 404–551 (TARTPLSEAE…RDREREYRHR (148 aa)) is sufficient for nuclear speckle localization. Residues 405–551 (ARTPLSEAEF…RDREREYRHR (147 aa)) form a necessary for RNA-binding region. Positions 481–551 (ESKSYGSGSR…RDREREYRHR (71 aa)) are necessary for interaction with SRSF3, SRSF7 and TRA2B/SFRS10. Positions 489–503 (SRRERSRERDHSRSR) are enriched in basic and acidic residues. The interval 490-551 (RRERSRERDH…RDREREYRHR (62 aa)) is arg/Ser-rich domain. A phosphoserine mark is found at serine 494, serine 500, serine 511, serine 513, and serine 525. Residues 504–514 (EKSRRHKSRSR) show a composition bias toward basic residues. A sufficient for nuclear targeting region spans residues 510–551 (KSRSRDRHDDYYRERSRERERHRDRDRDRDRERDREREYRHR). A compositionally biased stretch (basic and acidic residues) spans 515-551 (DRHDDYYRERSRERERHRDRDRDRDRERDREREYRHR).

This sequence belongs to the RRM CPSF6/7 family. Component of the cleavage factor Im (CFIm) complex which is a heterotetramer composed of two subunits of NUDT21/CPSF5 and two subunits of CPSF6 or CPSF7 or a heterodimer of CPSF6 and CPSF7. The cleavage factor Im (CFIm) complex associates with the CPSF and CSTF complexes to promote the assembly of the core mRNA 3'-processing machinery. Associates with the exon junction complex (EJC). Associates with the 80S ribosome particle. Interacts (via the RRM domain) with NUDT21/CPSF5; this interaction is direct and enhances binding to RNA. Interacts (via Arg/Ser-rich domain) with FIP1L1 (preferentially via unphosphorylated form and Arg/Glu/Asp-rich domain); this interaction mediates, at least in part, the interaction between the CFIm and CPSF complexes and may be inhibited by CPSF6 hyper-phosphorylation. Interacts (via N-terminus) with NXF1; this interaction is direct. Interacts with SRSF3. Interacts with SRSF7. Interacts with SNRNP70. Interacts with TRA2B/SFRS10. Interacts with UPF1. Interacts with UPF3B. Interacts with VIRMA. Interacts (via Arg/Ser-rich domain) with TNPO3; promoting nuclear import of CPSF6 independently of its phosphorylation status. Interacts with YTHDC1. As to quaternary structure, (Microbial infection) Interacts (via C-terminus) with HIV-1 capsid protein p24 (CA). In terms of processing, phosphorylated. Phosphorylated in the Arg/Ser-rich domain by SRPK1, in vitro. Symmetrically dimethylated on arginine residues in the GAR motif by PRMT5 in a WDR77- and CLNS1A-dependent manner. Asymmetrically dimethylated on arginine residues in the GAR motif by PRMT1.

The protein resides in the nucleus. Its subcellular location is the nucleoplasm. It is found in the nucleus speckle. The protein localises to the cytoplasm. Functionally, component of the cleavage factor Im (CFIm) complex that functions as an activator of the pre-mRNA 3'-end cleavage and polyadenylation processing required for the maturation of pre-mRNA into functional mRNAs. CFIm contributes to the recruitment of multiprotein complexes on specific sequences on the pre-mRNA 3'-end, so called cleavage and polyadenylation signals (pA signals). Most pre-mRNAs contain multiple pA signals, resulting in alternative cleavage and polyadenylation (APA) producing mRNAs with variable 3'-end formation. The CFIm complex acts as a key regulator of cleavage and polyadenylation site choice during APA through its binding to 5'-UGUA-3' elements localized in the 3'-untranslated region (UTR) for a huge number of pre-mRNAs. CPSF6 enhances NUDT21/CPSF5 binding to 5'-UGUA-3' elements localized upstream of pA signals and promotes RNA looping, and hence activates directly the mRNA 3'-processing machinery. Plays a role in mRNA export. In terms of biological role, (Microbial infection) Binds HIV-1 capsid-nucleocapsid (HIV-1 CA-NC) complexes and might thereby promote the integration of the virus in the nucleus of dividing cells (in vitro). This is Cleavage and polyadenylation specificity factor subunit 6 from Homo sapiens (Human).